Here is a 190-residue protein sequence, read N- to C-terminus: Large ribosomal subunit protein bL25 (190 aa).

Residues Met-1–Asn-20 form a disordered region.

It belongs to the bacterial ribosomal protein bL25 family. CTC subfamily. Part of the 50S ribosomal subunit; part of the 5S rRNA/L5/L18/L25 subcomplex. Contacts the 5S rRNA. Binds to the 5S rRNA independently of L5 and L18.

Its function is as follows. This is one of the proteins that binds to the 5S RNA in the ribosome where it forms part of the central protuberance. This is Large ribosomal subunit protein bL25 from Nitratidesulfovibrio vulgaris (strain ATCC 29579 / DSM 644 / CCUG 34227 / NCIMB 8303 / VKM B-1760 / Hildenborough) (Desulfovibrio vulgaris).